The chain runs to 613 residues: MAEGVFSGAIGIDLGTTYSCVATYESSVEIIANEQGNRVTPSFVAFTPEERLIGDAAKNQAALNPRNTVFDAKRLIGRRFDDESVQSDMKTWPFKVIDANGSPMIEVEYLGETKSFSPQEISAMVLTKMKEIAEAKIGKKVEKAVITVPAYFNDAQRQATKDAGAIAGLNVLRIINEPTAAAIAYGLGAGKSEKERHVLIFDLGGGTFDVSLLNIAGGVYTVKSTSGNTHLGGQDFDTNLLEHFKAEFKKKTGLDISGDARALRRLRTAAERAKRTLSSVTQTTVEVDSLFEGEDFETSITRARFEDINAALFKSTLEPVEQVLKDAQISKSQIDEVVLVGGSTRIPKVQKLLSDFFEGKQLEKSINPDEAVAYGAAVQAAILTGSNLSDDTKDLLLLDVAPLSLGVAMQGDVFACVIPRNTTVPTIKRRTFTTVHDGQTTVTFPVYQGERVNCKDNTLLGEFDLKGIPPLPAGEPVLEAIFEVDANGILKVTAVEKSTGKTANITISNAIGRLSSEDIEKMVSQAEEFKAADEAFAKRHEARQRLESYVSSIEQTVSDPVLSAKMKKGAKSKVEAALADAFSALQIEESSAEDYRKAEIGLKRVVTKAMATR.

The segment at 1–391 (MAEGVFSGAI…ILTGSNLSDD (391 aa)) is nucleotide binding domain (NBD). Residues 16-18 (TTY), lysine 73, 205-207 (GGT), 271-278 (ERAKRTLS), and glycine 342 contribute to the ATP site. Residues 392–402 (TKDLLLLDVAP) form an inter-domain linker region. Residues 403 to 613 (LSLGVAMQGD…RVVTKAMATR (211 aa)) form a substrate binding domain (SBD) region. The lid domain (SBDalpha) stretch occupies residues 516–612 (SEDIEKMVSQ…KRVVTKAMAT (97 aa)). The Nuclear export signal signature appears at 574-582 (VEAALADAF).

It belongs to the heat shock protein 70 family. Ssb-type Hsp70 subfamily. Binds to ribosomes. Binds close to the ribosomal tunnel exit via contacts with both ribosomal proteins and rRNA. Directly interacts with nascent polypeptides. This interaction is dependent on the ribosome-associated complex (RAC). Interacts with SSE1. Interacts with FES1.

The protein resides in the cytoplasm. It carries out the reaction ATP + H2O = ADP + phosphate + H(+). Its function is as follows. Ribosome-bound, Hsp70-type chaperone that assists in the cotranslational folding of newly synthesized proteins in the cytosol. Stimulates folding by interacting with nascent chains, binding to short, largely hydrophobic sequences exposed by unfolded proteins, thereby stabilizing longer, more slowly translated, and aggregation-prone nascent polypeptides and domains that cannot fold stably until fully synthesized. The Hsp70-protein substrate interaction depends on ATP-binding and on allosteric regulation between the NBD and the SBD. The ATP-bound state is characterized by a fast exchange rate of substrate (low affinity state), while in the ADP-bound state exchange is much slower (high affinity state). During the Hsp70 cycle, the chaperone switches between the ATP-bound state (open conformation) and the ADP-bound state (closed conformation) by major conformational rearrangements involving mainly the lid domain. Ssb cooperates with a specific Hsp40/Hsp70 co-chaperone termed the ribosome-associated complex (RAC), which stimulates the ATPase activity of the ribosome-associated pool of Ssbs and switches it to the high affinity substrate binding state. Hsp110 chaperone SSE1 and FES1 act as nucleotide exchange factors that cause substrate release. The protein is Ribosome-associated molecular chaperone SSB1 (SSB1) of Eremothecium gossypii (strain ATCC 10895 / CBS 109.51 / FGSC 9923 / NRRL Y-1056) (Yeast).